We begin with the raw amino-acid sequence, 346 residues long: MSFRTIEWRDNKVVMIDQTRLPGEEVYNVYEDFQSVAEAIRGMIIRGAPAIGVAAAMGVALGAREIIADTYESFSRQLTNVCDVLARTRPTAVNLFWAIERMKRVAESNKDRDLHFIRETLKAEAIRIEEEDLEICRAIGRHGAPLIREGATVLTHCNAGGLATAGYGTALGVIRAAHEAGKNIQVFADETRPWLQGARLTAWELMKDGIPVTLIADNMAGYFMKKGAITACVVGADRIAANGDTANKIGTYSVAVLAKENKIPFYVAAPVSTLDLSLKSGDEIPIEERHACEVTHLQGLPVAPEGVKVRNPAFDVTPAKYIAGIITEKGVVRGDYERELKALVGQ.

Substrate is bound by residues 46-48, arginine 89, and glutamine 196; that span reads RGA. Aspartate 237 functions as the Proton donor in the catalytic mechanism. 247–248 serves as a coordination point for substrate; the sequence is NK.

Belongs to the eIF-2B alpha/beta/delta subunits family. MtnA subfamily.

The catalysed reaction is 5-(methylsulfanyl)-alpha-D-ribose 1-phosphate = 5-(methylsulfanyl)-D-ribulose 1-phosphate. It functions in the pathway amino-acid biosynthesis; L-methionine biosynthesis via salvage pathway; L-methionine from S-methyl-5-thio-alpha-D-ribose 1-phosphate: step 1/6. Functionally, catalyzes the interconversion of methylthioribose-1-phosphate (MTR-1-P) into methylthioribulose-1-phosphate (MTRu-1-P). This is Methylthioribose-1-phosphate isomerase from Geotalea daltonii (strain DSM 22248 / JCM 15807 / FRC-32) (Geobacter daltonii).